The chain runs to 160 residues: Cytochrome c-type biogenesis protein CcmE (160 aa).

Residues methionine 1–arginine 7 lie on the Cytoplasmic side of the membrane. The chain crosses the membrane as a helical; Signal-anchor for type II membrane protein span at residues alanine 8–alanine 28. Over methionine 29–proline 160 the chain is Periplasmic. Heme is bound by residues histidine 122 and tyrosine 126. Residues tryptophan 141–proline 160 form a disordered region.

Belongs to the CcmE/CycJ family.

Its subcellular location is the cell inner membrane. Its function is as follows. Heme chaperone required for the biogenesis of c-type cytochromes. Transiently binds heme delivered by CcmC and transfers the heme to apo-cytochromes in a process facilitated by CcmF and CcmH. This Parvibaculum lavamentivorans (strain DS-1 / DSM 13023 / NCIMB 13966) protein is Cytochrome c-type biogenesis protein CcmE.